Here is a 192-residue protein sequence, read N- to C-terminus: Signal peptidase complex catalytic subunit sec11 (192 aa).

Over 1-18 the chain is Cytoplasmic; that stretch reads MLSFLSSNLSNTRQSIAQ. Residues 19-39 traverse the membrane as a helical; Signal-anchor for type II membrane protein segment; that stretch reads VLNFALVLSTAFMLWKGLSVV. Residues 40–192 lie on the Lumenal side of the membrane; that stretch reads TASSSPIVVV…MGLMVILQRE (153 aa). Catalysis depends on charge relay system residues S53, H92, and D134. The interval 178-189 is C-terminal short (CTS) helix; sequence VLLGIMGLMVIL.

The protein belongs to the peptidase S26B family. Component of the signal peptidase complex (SPC) composed of a catalytic subunit SEC11 and three accessory subunits SPC1, SPC2 and SPC3. The complex induces a local thinning of the ER membrane which is used to measure the length of the signal peptide (SP) h-region of protein substrates. This ensures the selectivity of the complex towards h-regions shorter than 18-20 amino acids. SPC associates with the translocon complex.

It localises to the endoplasmic reticulum membrane. The catalysed reaction is Cleavage of hydrophobic, N-terminal signal or leader sequences from secreted and periplasmic proteins.. In terms of biological role, catalytic component of the signal peptidase complex (SPC) which catalyzes the cleavage of N-terminal signal sequences from nascent proteins as they are translocated into the lumen of the endoplasmic reticulum. Specifically cleaves N-terminal signal peptides that contain a hydrophobic alpha-helix (h-region) shorter than 18-20 amino acids. This is Signal peptidase complex catalytic subunit sec11 (sec11) from Emericella nidulans (strain FGSC A4 / ATCC 38163 / CBS 112.46 / NRRL 194 / M139) (Aspergillus nidulans).